The primary structure comprises 223 residues: MLCQYLPPDDRPPSSAPPLLAAHALTYSRNATPILGPLHFHINPGEALIVQGPNGIGKTTLLRILAGLLHSDSGHIDINTHHNTTAPERTRHIAYLSHLPGLKQDLSALENLHFLNALHGYHPQRTPSNALTLVGLTDHAQTLVRQLSAGQKKRLSLAQLWLSPAPLWLLDEPYANLDPEGITLLNHILTAHIHTQGGTLLTTPGARPTLPVPTRLLHLKKAP.

Positions 20 to 222 constitute an ABC transporter domain; it reads LAAHALTYSR…PTRLLHLKKA (203 aa). Residue 52–59 coordinates ATP; it reads GPNGIGKT.

This sequence belongs to the ABC transporter superfamily. CcmA exporter (TC 3.A.1.107) family. As to quaternary structure, the complex is composed of two ATP-binding proteins (CcmA) and two transmembrane proteins (CcmB).

It is found in the cell inner membrane. It carries out the reaction heme b(in) + ATP + H2O = heme b(out) + ADP + phosphate + H(+). Functionally, part of the ABC transporter complex CcmAB involved in the biogenesis of c-type cytochromes; once thought to export heme, this seems not to be the case, but its exact role is uncertain. Responsible for energy coupling to the transport system. This chain is Cytochrome c biogenesis ATP-binding export protein CcmA, found in Xylella fastidiosa (strain 9a5c).